A 588-amino-acid polypeptide reads, in one-letter code: 2-succinyl-5-enolpyruvyl-6-hydroxy-3-cyclohexene-1-carboxylate synthase (588 aa).

The segment at Met1–Ser22 is disordered.

This sequence belongs to the TPP enzyme family. MenD subfamily. In terms of assembly, homodimer. It depends on Mg(2+) as a cofactor. Requires Mn(2+) as cofactor. The cofactor is thiamine diphosphate.

The catalysed reaction is isochorismate + 2-oxoglutarate + H(+) = 5-enolpyruvoyl-6-hydroxy-2-succinyl-cyclohex-3-ene-1-carboxylate + CO2. It functions in the pathway quinol/quinone metabolism; 1,4-dihydroxy-2-naphthoate biosynthesis; 1,4-dihydroxy-2-naphthoate from chorismate: step 2/7. Its pathway is quinol/quinone metabolism; menaquinone biosynthesis. In terms of biological role, catalyzes the thiamine diphosphate-dependent decarboxylation of 2-oxoglutarate and the subsequent addition of the resulting succinic semialdehyde-thiamine pyrophosphate anion to isochorismate to yield 2-succinyl-5-enolpyruvyl-6-hydroxy-3-cyclohexene-1-carboxylate (SEPHCHC). The chain is 2-succinyl-5-enolpyruvyl-6-hydroxy-3-cyclohexene-1-carboxylate synthase from Clavibacter michiganensis subsp. michiganensis (strain NCPPB 382).